We begin with the raw amino-acid sequence, 933 residues long: Serine/threonine-protein kinase EDR1 (933 aa).

Residues 1-10 (MKHIFKKLHR) are compositionally biased toward basic residues. Disordered regions lie at residues 1-74 (MKHI…ADYM), 342-424 (CNSN…TAIG), 527-550 (HRDPRYGNTQSSYATSSSNGAISS), and 604-650 (HGQQ…YRND). The span at 37-48 (NPPQATPSSVTE) shows a compositional bias: polar residues. The span at 53–68 (AGATSSMASPAPTAAS) shows a compositional bias: low complexity. Residues 342-356 (CNSNGNKFPTAQFSN) show a composition bias toward polar residues. Over residues 367–378 (SSHSSMANYSSS) the composition is skewed to low complexity. A compositionally biased stretch (basic and acidic residues) spans 379 to 389 (LDRRTEAERTD). Residues 404–413 (SSPSSVTSST) are compositionally biased toward low complexity. A compositionally biased stretch (polar residues) spans 533 to 550 (GNTQSSYATSSSNGAISS). Residues 607–621 (QNDESHIHDHRKYTS) are compositionally biased toward basic and acidic residues. Positions 669–925 (LVIAERIGLG…QLTEVLKPLN (257 aa)) constitute a Protein kinase domain. Residues 675–683 (IGLGSYGEV) and lysine 696 each bind ATP. The active-site Proton acceptor is aspartate 792.

The protein belongs to the protein kinase superfamily. TKL Ser/Thr protein kinase family. RAF subfamily. As to quaternary structure, interacts with KEG. Binds and recruited by EDR4 at the powdery mildew (e.g. G.cichoracearum) penetration site on the plasma membrane. Autophosphorylated.

Its subcellular location is the cell membrane. It is found in the endosome. It localises to the nucleus. The protein resides in the endoplasmic reticulum. The protein localises to the golgi apparatus. Its subcellular location is the trans-Golgi network. It is found in the early endosome. It carries out the reaction L-seryl-[protein] + ATP = O-phospho-L-seryl-[protein] + ADP + H(+). The catalysed reaction is L-threonyl-[protein] + ATP = O-phospho-L-threonyl-[protein] + ADP + H(+). In terms of biological role, MAPKKK serine/threonine-protein kinase involved in the regulation of a MAP kinase cascade (probably including MPK3 and MPK6) that negatively regulates salicylic acid- (SA-) dependent defense responses, abscisic acid (ABA) signaling, and ethylene-induced senescence. Also modulates stress response (e.g. drought) signaling and cell death, in an ORE9-dependent manner. Functions at a point of cross talk between ethylene, ABA and SA signaling that impinges on senescence and cell death. On the other hand, it confers sensitivity to various pathogens such as the fungus E.cichoracearum, the oomycete H.parasitica and the bacteria P.syringae pv. tomato DC3000. Required for resistance to some hemibiotrophic/necrotrophic fungal pathogens (e.g. C.gloeosporioides, C.higginsianum and A.brassicicola) through the induction of defensin expression, probably by repressing MYC2, an inhibitor of defensin genes (PDFs). Together with KEG, may regulate endocytic trafficking and/or the formation of signaling complexes on trans-Golgi network (TGN)/ early endosome (EE) vesicles during stress responses. The polypeptide is Serine/threonine-protein kinase EDR1 (EDR1) (Arabidopsis thaliana (Mouse-ear cress)).